The primary structure comprises 592 residues: Frizzled-1 (592 aa).

The interval 1–26 (MAERRGPAGGGSGEVGGGRRAGGDRC) is disordered. A signal peptide spans 1–48 (MAERRGPAGGGSGEVGGGRRAGGDRCPRRPPALPLLLLLWAAALPAGG). Residues 7 to 20 (PAGGGSGEVGGGRR) are compositionally biased toward gly residues. The Extracellular portion of the chain corresponds to 49-271 (QPAAQPAALS…PEELRFSRTW (223 aa)). Residues 65-184 (PDHGYCQPIS…HGAGELCVGQ (120 aa)) form the FZ domain. 5 disulfide bridges follow: Cys-70–Cys-131, Cys-78–Cys-124, Cys-115–Cys-152, Cys-141–Cys-181, and Cys-145–Cys-169. N-linked (GlcNAc...) asparagine glycosylation occurs at Asn-84. Asn-185 carries N-linked (GlcNAc...) asparagine glycosylation. Positions 185 to 219 (NASERGTPTPALRPESWTSNPHRGGGAGGSGPGEA) are disordered. Residues 207 to 218 (RGGGAGGSGPGE) show a composition bias toward gly residues. The chain crosses the membrane as a helical span at residues 272 to 292 (IGIWSVLCCASTLFTVLTYLV). The Cytoplasmic portion of the chain corresponds to 293–303 (DMKRFSYPERP). A helical transmembrane segment spans residues 304–324 (IIFLSGCYTAVAVAYIAGFLL). The Extracellular segment spans residues 325–351 (EERVVCNERFAEDGSRTVAQGTKREGC). Residues 352–372 (TILFMMLYFFGMASSIWWVIL) form a helical membrane-spanning segment. Residues 373 to 394 (SLTWFLAAGMKWGHEAIEANSQ) are Cytoplasmic-facing. Residues 395–415 (YFHLAAWAVPAIKTITILALG) form a helical membrane-spanning segment. Over 416-438 (QVDGDVLSGVCFVGINNVDALRG) the chain is Extracellular. A helical membrane pass occupies residues 439-459 (FVLAPLFVYLFIGTSFLLAGF). At 460 to 485 (VSLFRIRTIMKHDGTKTEKLEKLMVR) the chain is on the cytoplasmic side. The chain crosses the membrane as a helical span at residues 486–506 (IGIFSVLYTVPATIVIACYFY). The Extracellular portion of the chain corresponds to 507-546 (EQAFREQWERSWVTQSCKSYAIPCPNNHSSHHPPMSPDFT). N-linked (GlcNAc...) asparagine glycosylation occurs at Asn-533. The chain crosses the membrane as a helical span at residues 547-567 (VFMIKYLMTLIVGITSGFWIW). The Cytoplasmic portion of the chain corresponds to 568–592 (SGKTLNSWRKFYTRLTNSKQGETTV). Residues 570–575 (KTLNSW) carry the Lys-Thr-X-X-X-Trp motif, mediates interaction with the PDZ domain of Dvl family members motif. The PDZ-binding signature appears at 590–592 (TTV).

Belongs to the G-protein coupled receptor Fz/Smo family. As to expression, expressed in the lens, otic placode (medial wall of the vesicle) and in epibranchial placode. Also expressed in the developing somites (dermomyotome).

The protein resides in the cell membrane. Functionally, receptor for Wnt proteins. Functions in the canonical Wnt/beta-catenin signaling pathway. The canonical Wnt/beta-catenin signaling pathway leads to the activation of disheveled proteins, inhibition of GSK-3 kinase, nuclear accumulation of beta-catenin and activation of Wnt target genes. A second signaling pathway involving PKC and calcium fluxes has been seen for some family members, but it is not yet clear if it represents a distinct pathway or if it can be integrated in the canonical pathway, as PKC seems to be required for Wnt-mediated inactivation of GSK-3 kinase. Both pathways seem to involve interactions with G-proteins. May be involved in transduction and intercellular transmission of polarity information during tissue morphogenesis and/or in differentiated tissues. This Gallus gallus (Chicken) protein is Frizzled-1 (FZD1).